Here is a 419-residue protein sequence, read N- to C-terminus: MNIASQIEDMGRRARAAGRRLAAASPAAKAGALDHLATLLEQRQDAILAANAADLAAAAEAGMDAPRMDRLRLTPATIAEMAAACRHVAALPDPVGAIETQWQRPNGLLVGKMRIPLGVIAMIYESRPNVTIDSAILCLKAGNAVILRGGSEAIHSNLALAALITEALSSVGLPAEAVQVVSTTDRAVIAELCKLEEHIDVIIPRGGETLIRAVVDMARMPVLKHYKGVCHAYIDSGADLAQAVEIIHNAKVQRPGVCNALEGLLVHRDEAAAFLPAIAERLGNDGVEFRACPASLPLLGDSAIPMKDEDNGQEFHDLILLVRIVDDMDEALAHIAAYGSNHTEIICTRDHGNAMRFLREADASMVAVNASSRFNDGGQLGLGAEIGISTSKLHSYGPMGVQELTTTKFVVFGAGQIRQ.

It belongs to the gamma-glutamyl phosphate reductase family.

It is found in the cytoplasm. The catalysed reaction is L-glutamate 5-semialdehyde + phosphate + NADP(+) = L-glutamyl 5-phosphate + NADPH + H(+). It functions in the pathway amino-acid biosynthesis; L-proline biosynthesis; L-glutamate 5-semialdehyde from L-glutamate: step 2/2. In terms of biological role, catalyzes the NADPH-dependent reduction of L-glutamate 5-phosphate into L-glutamate 5-semialdehyde and phosphate. The product spontaneously undergoes cyclization to form 1-pyrroline-5-carboxylate. This is Gamma-glutamyl phosphate reductase from Nitratidesulfovibrio vulgaris (strain ATCC 29579 / DSM 644 / CCUG 34227 / NCIMB 8303 / VKM B-1760 / Hildenborough) (Desulfovibrio vulgaris).